We begin with the raw amino-acid sequence, 693 residues long: DNA-directed RNA polymerase subunit beta' (693 aa).

4 residues coordinate Zn(2+): Cys-76, Cys-78, Cys-94, and Cys-97. Asp-496, Asp-498, and Asp-500 together coordinate Mg(2+).

This sequence belongs to the RNA polymerase beta' chain family. RpoC1 subfamily. As to quaternary structure, in plastids the minimal PEP RNA polymerase catalytic core is composed of four subunits: alpha, beta, beta', and beta''. When a (nuclear-encoded) sigma factor is associated with the core the holoenzyme is formed, which can initiate transcription. The cofactor is Mg(2+). Zn(2+) serves as cofactor.

Its subcellular location is the plastid. It is found in the chloroplast. It carries out the reaction RNA(n) + a ribonucleoside 5'-triphosphate = RNA(n+1) + diphosphate. DNA-dependent RNA polymerase catalyzes the transcription of DNA into RNA using the four ribonucleoside triphosphates as substrates. This is DNA-directed RNA polymerase subunit beta' from Nuphar advena (Common spatterdock).